Consider the following 327-residue polypeptide: Phenylalanine--tRNA ligase alpha subunit (327 aa).

E252 lines the Mg(2+) pocket.

This sequence belongs to the class-II aminoacyl-tRNA synthetase family. Phe-tRNA synthetase alpha subunit type 1 subfamily. As to quaternary structure, tetramer of two alpha and two beta subunits. Mg(2+) serves as cofactor.

Its subcellular location is the cytoplasm. It catalyses the reaction tRNA(Phe) + L-phenylalanine + ATP = L-phenylalanyl-tRNA(Phe) + AMP + diphosphate + H(+). The polypeptide is Phenylalanine--tRNA ligase alpha subunit (Edwardsiella ictaluri (strain 93-146)).